A 318-amino-acid chain; its full sequence is Protein disulfide-isomerase MPD1 (318 aa).

An N-terminal signal peptide occupies residues methionine 1–alanine 21. The Thioredoxin domain maps to glutamine 22–lysine 158. The N-linked (GlcNAc...) asparagine glycan is linked to asparagine 47. An intrachain disulfide couples cysteine 59 to cysteine 62. N-linked (GlcNAc...) asparagine glycosylation is present at asparagine 307. The Prevents secretion from ER motif lies at histidine 315 to leucine 318.

Belongs to the protein disulfide isomerase family. In terms of assembly, interacts with CNE1 and EPS1.

The protein localises to the endoplasmic reticulum lumen. It carries out the reaction Catalyzes the rearrangement of -S-S- bonds in proteins.. In terms of biological role, participates in the folding of proteins containing disulfide bonds. The sequence is that of Protein disulfide-isomerase MPD1 (MPD1) from Saccharomyces cerevisiae (strain ATCC 204508 / S288c) (Baker's yeast).